Reading from the N-terminus, the 963-residue chain is Importin-13 (963 aa).

20 HEAT repeats span residues 24-54 (ENVE…QAQV), 56-88 (PQAW…KISR), 95-135 (TDQY…LSMM), 142-179 (AVAD…EFQT), 194-231 (LAVE…SWVQ), 236-268 (LQDC…NAIS), 276-325 (VNTL…ALLD), 330-372 (WQSF…DDIL), 375-438 (EAEK…YEML), 440-476 (AELL…FQSI), 487-522 (VVPG…WLAD), 524-558 (PVMI…CREC), 562-600 (LPPY…LLSA), 603-648 (VEEI…SNLF), 676-716 (PVVV…VKTL), 720-754 (FAPM…VHIF), 761-803 (FPPI…ALKR), 815-845 (VKAV…TELL), 860-893 (EDGR…FALN), and 897-931 (FSLL…QQIL). Residues 45-111 (AQKWLMQAQV…KAQLFTQITR (67 aa)) form the Importin N-terminal domain.

Belongs to the importin beta family. As to quaternary structure, interacts with UBC9, RAN, RBM8A, eIF-1A and PAX6. Expressed in fetal brain, heart, intestine and kidney.

It is found in the cytoplasm. The protein localises to the nucleus. In terms of biological role, functions in nuclear protein import as nuclear transport receptor. Serves as receptor for nuclear localization signals (NLS) in cargo substrates. Is thought to mediate docking of the importin/substrate complex to the nuclear pore complex (NPC) through binding to nucleoporin and the complex is subsequently translocated through the pore by an energy requiring, Ran-dependent mechanism. At the nucleoplasmic side of the NPC, Ran binds to the importin, the importin/substrate complex dissociates and importin is re-exported from the nucleus to the cytoplasm where GTP hydrolysis releases Ran. The directionality of nuclear import is thought to be conferred by an asymmetric distribution of the GTP- and GDP-bound forms of Ran between the cytoplasm and nucleus. Mediates the nuclear import of UBC9, the RBM8A/MAGOH complex, PAX6 and probably other members of the paired homeobox family. Also mediates nuclear export of eIF-1A, and the cytoplasmic release of eIF-1A is triggered by the loading of import substrates onto IPO13. The protein is Importin-13 (IPO13) of Homo sapiens (Human).